Consider the following 311-residue polypeptide: Ceroid-lipofuscinosis neuronal protein 6 (311 aa).

Transmembrane regions (helical) follow at residues 56 to 76, 81 to 101, 111 to 131, 179 to 199, 204 to 224, 225 to 245, and 260 to 280; these read WVLD…WFPL, VGDY…LKLI, SITY…LVGD, CMWY…CFTA, SLIP…YWYL, VTEG…LALV, and LFLF…VAWL.

Interacts with CRMP2. Interacts with CLN5. Interacts with CLN3.

It localises to the endoplasmic reticulum membrane. Its subcellular location is the endoplasmic reticulum. This is Ceroid-lipofuscinosis neuronal protein 6 (CLN6) from Homo sapiens (Human).